The following is a 1325-amino-acid chain: NHS-like protein 3 (1325 aa).

The stretch at 53–85 (LEDLHTEAQEGLKILQQEEEDTSSKERNESLEN) forms a coiled coil. 10 disordered regions span residues 68–92 (QQEEEDTSSKERNESLENDSTSGHS), 111–131 (QGSTFKPLNPVKRLDKSKRRS), 291–348 (CSAS…KGKC), 368–570 (MSVS…AKTS), 595–614 (QTNTTSSEPLKFSPPLTTVK), 829–891 (EVNG…MEES), 935–981 (LLST…VSEF), 1084–1138 (VGED…SSAV), 1243–1272 (GTKKPIKVPPPVAKKPVHGSNPPNKMENAT), and 1293–1313 (SDQVHPAGQRAQSLGNQEQAS). The span at 296–334 (ASKGSMASASPSSSRSGSGTNQAPPTTSPSRSNSQSSET) shows a compositional bias: low complexity. Positions 335–344 (IVSNSSTISS) are enriched in polar residues. Over residues 369 to 378 (SVSSSSSWKS) the composition is skewed to low complexity. Polar residues predominate over residues 400 to 412 (VRNSHSFSRSLSV). Over residues 428-447 (LHHENMQRQREQGDIQDPKD) the composition is skewed to basic and acidic residues. The span at 450–460 (PNNNEQTNRDI) shows a compositional bias: polar residues. Positions 515–524 (KTRECGENFD) are enriched in basic and acidic residues. The span at 528-541 (SPSSGYSSQSGTPT) shows a compositional bias: low complexity. Over residues 834–850 (SPPPSPPPEHHPPPPPI) the composition is skewed to pro residues. Polar residues-rich tracts occupy residues 935-948 (LLSTNVSDMDSSPE) and 1088-1100 (QVNNDSKPSTEPT). The segment covering 1124-1138 (KSNSPAKSSSASSAV) has biased composition (low complexity). The span at 1302–1311 (RAQSLGNQEQ) shows a compositional bias: polar residues.

Able to directly activate the TNF-NFkappaB signaling pathway. The chain is NHS-like protein 3 (nhsl3) from Danio rerio (Zebrafish).